The primary structure comprises 322 residues: Sideroflexin-2 (322 aa).

N-acetylmethionine is present on Met1. A run of 5 helical transmembrane segments spans residues 100–122 (MIIT…WQWV), 142–164 (SVRQ…AVGM), 174–192 (LVGR…CVNI), 228–250 (VVIS…MERL), and 265–287 (PLQV…GLFP).

It belongs to the sideroflexin family. Widely expressed, highest levels in kidney, liver, and pancreas.

It localises to the mitochondrion inner membrane. The protein localises to the mitochondrion outer membrane. The enzyme catalyses L-serine(in) = L-serine(out). Its function is as follows. Mitochondrial amino-acid transporter that mediates transport of serine into mitochondria. Involved in mitochondrial iron homeostasis by regulating heme biosynthesis. This chain is Sideroflexin-2, found in Homo sapiens (Human).